A 299-amino-acid chain; its full sequence is 4-hydroxy-tetrahydrodipicolinate synthase (299 aa).

Residue threonine 50 coordinates pyruvate. The Proton donor/acceptor role is filled by tyrosine 139. The active-site Schiff-base intermediate with substrate is the lysine 167. Valine 209 contacts pyruvate.

This sequence belongs to the DapA family. As to quaternary structure, homotetramer; dimer of dimers.

Its subcellular location is the cytoplasm. The enzyme catalyses L-aspartate 4-semialdehyde + pyruvate = (2S,4S)-4-hydroxy-2,3,4,5-tetrahydrodipicolinate + H2O + H(+). It participates in amino-acid biosynthesis; L-lysine biosynthesis via DAP pathway; (S)-tetrahydrodipicolinate from L-aspartate: step 3/4. Functionally, catalyzes the condensation of (S)-aspartate-beta-semialdehyde [(S)-ASA] and pyruvate to 4-hydroxy-tetrahydrodipicolinate (HTPA). The chain is 4-hydroxy-tetrahydrodipicolinate synthase from Synechococcus elongatus (strain ATCC 33912 / PCC 7942 / FACHB-805) (Anacystis nidulans R2).